The chain runs to 297 residues: Aspartate carbamoyltransferase catalytic subunit (297 aa).

Positions 49 and 50 each coordinate carbamoyl phosphate. Position 77 (K77) interacts with L-aspartate. Carbamoyl phosphate is bound by residues R99, H129, and Q132. Positions 162 and 215 each coordinate L-aspartate. Carbamoyl phosphate is bound by residues G256 and P257.

It belongs to the aspartate/ornithine carbamoyltransferase superfamily. ATCase family. Heterododecamer (2C3:3R2) of six catalytic PyrB chains organized as two trimers (C3), and six regulatory PyrI chains organized as three dimers (R2).

The catalysed reaction is carbamoyl phosphate + L-aspartate = N-carbamoyl-L-aspartate + phosphate + H(+). It participates in pyrimidine metabolism; UMP biosynthesis via de novo pathway; (S)-dihydroorotate from bicarbonate: step 2/3. Functionally, catalyzes the condensation of carbamoyl phosphate and aspartate to form carbamoyl aspartate and inorganic phosphate, the committed step in the de novo pyrimidine nucleotide biosynthesis pathway. The chain is Aspartate carbamoyltransferase catalytic subunit from Legionella pneumophila (strain Corby).